Reading from the N-terminus, the 419-residue chain is Serine hydroxymethyltransferase (419 aa).

(6S)-5,6,7,8-tetrahydrofolate contacts are provided by residues Leu121 and 125–127 (GHL). Lys230 is modified (N6-(pyridoxal phosphate)lysine). 355–357 (SPF) is a (6S)-5,6,7,8-tetrahydrofolate binding site.

This sequence belongs to the SHMT family. In terms of assembly, homodimer. Requires pyridoxal 5'-phosphate as cofactor.

The protein resides in the cytoplasm. It catalyses the reaction (6R)-5,10-methylene-5,6,7,8-tetrahydrofolate + glycine + H2O = (6S)-5,6,7,8-tetrahydrofolate + L-serine. It participates in one-carbon metabolism; tetrahydrofolate interconversion. It functions in the pathway amino-acid biosynthesis; glycine biosynthesis; glycine from L-serine: step 1/1. In terms of biological role, catalyzes the reversible interconversion of serine and glycine with tetrahydrofolate (THF) serving as the one-carbon carrier. This reaction serves as the major source of one-carbon groups required for the biosynthesis of purines, thymidylate, methionine, and other important biomolecules. Also exhibits THF-independent aldolase activity toward beta-hydroxyamino acids, producing glycine and aldehydes, via a retro-aldol mechanism. The protein is Serine hydroxymethyltransferase of Alkalilimnicola ehrlichii (strain ATCC BAA-1101 / DSM 17681 / MLHE-1).